We begin with the raw amino-acid sequence, 1930 residues long: Transport and Golgi organization protein 1 homolog (1930 aa).

Residues 1–24 (MAAAPGLLFWLFVLGALWWVPGQS) form the signal peptide. The Lumenal portion of the chain corresponds to 25–1171 (DLSHGRRFSD…EPAAVPPLES (1147 aa)). The SH3 domain occupies 45-107 (MLMYRGKALE…PKDLIKVLHK (63 aa)). Disordered stretches follow at residues 144-263 (LELE…REKT), 317-496 (EEEE…AAEK), 547-737 (LGSS…MNSQ), 754-891 (TKQP…TPEI), and 1018-1149 (TAPL…PVGA). Over residues 152 to 189 (EESKKAEEVSQHREKSPEESRGRELDPVPEPEAFRADS) the composition is skewed to basic and acidic residues. Over residues 197-211 (SESTEGLQGQPSAQE) the composition is skewed to polar residues. Serine 229 bears the Phosphoserine mark. The span at 247–256 (ESRTGNSSPA) shows a compositional bias: polar residues. Positions 317-330 (EEEEEVEEDADSSD) are enriched in acidic residues. The segment covering 338-368 (SDKDEKVPGKPMIEKYLTDKDPNLSEEDKVE) has biased composition (basic and acidic residues). The N-linked (GlcNAc...) asparagine glycan is linked to asparagine 360. The segment covering 420–430 (DSEDEGDDLFV) has biased composition (acidic residues). Basic and acidic residues-rich tracts occupy residues 431 to 442 (EEPKTNDVKDSE) and 451 to 461 (GEEKDIQESRK). Residue asparagine 631 is glycosylated (N-linked (GlcNAc...) asparagine). The segment covering 661–677 (EDGTDAEQARAIRRPQE) has biased composition (basic and acidic residues). The segment covering 692–701 (DEEEEEEEGD) has biased composition (acidic residues). Over residues 715 to 726 (VSAQQSRENSPS) the composition is skewed to polar residues. Over residues 791 to 800 (EESHLADMRA) the composition is skewed to basic and acidic residues. Serine 856 is subject to Phosphoserine. The span at 1030–1039 (GWARPGEERQ) shows a compositional bias: basic and acidic residues. Composition is skewed to polar residues over residues 1040–1054 (PPQQDSLPQENTGDL) and 1115–1127 (QPVTGYTSTSEVS). The segment covering 1128–1137 (QKPDTKKDID) has biased composition (basic and acidic residues). The stretch at 1172–1192 (AFGSLYAFILYLSKMLLATLP) is an intramembrane region. The Lumenal segment spans residues 1193 to 1202 (DNVQPGPDFY). The chain crosses the membrane as a helical span at residues 1203–1223 (GLPWQPVIITAVLGIVSFAIF). Residues 1224 to 1930 (SWRTILVVKS…DRSQASKPTP (707 aa)) lie on the Cytoplasmic side of the membrane. Coiled coils occupy residues 1236-1329 (YQVT…KNQD) and 1359-1422 (LNEA…EIAL). The segment at 1238–1677 (VTEKQISEKL…VIVKPMPGRP (440 aa)) is mediates interaction with MIA2. The tract at residues 1447 to 1472 (ESEDPDKGGNESDDLANGETGGDRSE) is disordered. Serine 1458 carries the post-translational modification Phosphoserine. Positions 1514–1662 (NLEDQIKKLE…LLEMTQKMAM (149 aa)) form a coiled coil. Disordered stretches follow at residues 1669-1796 (IVKP…VPLM), 1801-1820 (PPPIRYGPPPQLCGGPFGPR), and 1840-1930 (APGV…KPTP). Over residues 1677 to 1694 (PNTQNPPRRGLLSQNGSF) the composition is skewed to polar residues. A phosphoserine mark is found at serine 1693 and serine 1705. Over residues 1706-1715 (PPLPAEPPGR) the composition is skewed to pro residues. Positions 1722-1738 (SRRDTPRSEFGSLDRHL) are enriched in basic and acidic residues. Phosphoserine occurs at positions 1733, 1754, 1766, and 1770. The span at 1760–1773 (PVVNSSSRSSSPAK) shows a compositional bias: low complexity. A proline-rich domain (PRD); mediates interaction with the COPII coat subunits SEC23A and SEC23B region spans residues 1776-1930 (DEGKVNMAPK…DRSQASKPTP (155 aa)). The span at 1801–1811 (PPPIRYGPPPQ) shows a compositional bias: pro residues. Residue arginine 1805 is modified to Asymmetric dimethylarginine. The SEC16A-interacting region (SIR); required for its localization to endoplasmic reticulum exit sites and for its interaction with SEC16A stretch occupies residues 1809–1869 (PPQLCGGPFG…GHTPFRPPGS (61 aa)). Residues 1846–1858 (GKRDLPLDPREFL) show a composition bias toward basic and acidic residues. The segment covering 1881 to 1898 (RLPPPTHGPQEYPPPPPA) has biased composition (pro residues). Residue serine 1915 is modified to Phosphoserine. Over residues 1915 to 1930 (SPSSVQDRSQASKPTP) the composition is skewed to polar residues.

This sequence belongs to the MIA/OTOR family. Tango1 subfamily. As to quaternary structure, interacts with MIA2. Interacts (via SH3 domain) with COL7A1. Interacts with the COPII coat subunits SEC23A, SEC23B and maybe SEC24C. May interact with APOB and MIA2. Interacts with SEC16A.

The protein resides in the endoplasmic reticulum membrane. Functionally, plays a role in the transport of cargos that are too large to fit into COPII-coated vesicles and require specific mechanisms to be incorporated into membrane-bound carriers and exported from the endoplasmic reticulum. This protein is required for collagen VII (COL7A1) secretion by loading COL7A1 into transport carriers. It may participate in cargo loading of COL7A1 at endoplasmic reticulum exit sites by binding to COPII coat subunits Sec23/24 and guiding SH3-bound COL7A1 into a growing carrier. Does not play a role in global protein secretion and is apparently specific to COL7A1 cargo loading. However, it may participate in secretion of other proteins in cells that do not secrete COL7A1. It is also specifically required for the secretion of lipoproteins by participating in their export from the endoplasmic reticulum. Required for correct assembly of COPII coat components at endoplasmic reticulum exit sites (ERES) and for the localization of SEC16A and membrane-bound ER-resident complexes consisting of MIA2 and PREB/SEC12 to ERES. This chain is Transport and Golgi organization protein 1 homolog, found in Mus musculus (Mouse).